Here is a 516-residue protein sequence, read N- to C-terminus: GMP synthase [glutamine-hydrolyzing] (516 aa).

The region spanning 8-198 is the Glutamine amidotransferase type-1 domain; it reads KILILDFGSQ…VVNICGCDTL (191 aa). Catalysis depends on Cys84, which acts as the Nucleophile. Catalysis depends on residues His172 and Glu174. In terms of domain architecture, GMPS ATP-PPase spans 199–391; the sequence is WNIENIIEND…LGLPYNMLYR (193 aa). Residue 226-232 participates in ATP binding; the sequence is SGGVDSS.

Homodimer.

It carries out the reaction XMP + L-glutamine + ATP + H2O = GMP + L-glutamate + AMP + diphosphate + 2 H(+). Its pathway is purine metabolism; GMP biosynthesis; GMP from XMP (L-Gln route): step 1/1. In terms of biological role, catalyzes the synthesis of GMP from XMP. The polypeptide is GMP synthase [glutamine-hydrolyzing] (Francisella tularensis subsp. holarctica (strain LVS)).